Reading from the N-terminus, the 385-residue chain is UDP-N-acetylglucosamine--N-acetylmuramyl-(pentapeptide) pyrophosphoryl-undecaprenol N-acetylglucosamine transferase (385 aa).

UDP-N-acetyl-alpha-D-glucosamine is bound by residues 11 to 13 (TGG), Asn-117, Arg-160, Ser-215, and Gln-317.

This sequence belongs to the glycosyltransferase 28 family. MurG subfamily.

The protein localises to the cell inner membrane. The enzyme catalyses di-trans,octa-cis-undecaprenyl diphospho-N-acetyl-alpha-D-muramoyl-L-alanyl-D-glutamyl-meso-2,6-diaminopimeloyl-D-alanyl-D-alanine + UDP-N-acetyl-alpha-D-glucosamine = di-trans,octa-cis-undecaprenyl diphospho-[N-acetyl-alpha-D-glucosaminyl-(1-&gt;4)]-N-acetyl-alpha-D-muramoyl-L-alanyl-D-glutamyl-meso-2,6-diaminopimeloyl-D-alanyl-D-alanine + UDP + H(+). It functions in the pathway cell wall biogenesis; peptidoglycan biosynthesis. Functionally, cell wall formation. Catalyzes the transfer of a GlcNAc subunit on undecaprenyl-pyrophosphoryl-MurNAc-pentapeptide (lipid intermediate I) to form undecaprenyl-pyrophosphoryl-MurNAc-(pentapeptide)GlcNAc (lipid intermediate II). The sequence is that of UDP-N-acetylglucosamine--N-acetylmuramyl-(pentapeptide) pyrophosphoryl-undecaprenol N-acetylglucosamine transferase from Rickettsia typhi (strain ATCC VR-144 / Wilmington).